Reading from the N-terminus, the 306-residue chain is Oligopeptide transport system permease protein OppB (306 aa).

Residues M1–E11 lie on the Cytoplasmic side of the membrane. The helical transmembrane segment at A12–G32 threads the bilayer. The Periplasmic portion of the chain corresponds to S33–K99. Residues F94–V293 enclose the ABC transmembrane type-1 domain. The helical transmembrane segment at L100 to A120 threads the bilayer. The Cytoplasmic segment spans residues L121–T137. A helical membrane pass occupies residues G138–L158. Topologically, residues H159–G169 are periplasmic. Residues A170–A190 form a helical membrane-spanning segment. Over R191–L229 the chain is Cytoplasmic. The helical transmembrane segment at L230–I250 threads the bilayer. The Periplasmic portion of the chain corresponds to E251 to T279. A helical membrane pass occupies residues I280–I300. The Cytoplasmic segment spans residues D301 to Y306.

It belongs to the binding-protein-dependent transport system permease family. OppBC subfamily. As to quaternary structure, the complex is composed of two ATP-binding proteins (OppD and OppF), two transmembrane proteins (OppB and OppC) and a solute-binding protein (OppA).

It localises to the cell inner membrane. Part of the ABC transporter complex OppABCDF involved in the uptake of oligopeptides. Probably responsible for the translocation of the substrate across the membrane. The sequence is that of Oligopeptide transport system permease protein OppB (oppB) from Shigella flexneri.